A 549-amino-acid chain; its full sequence is MQNINPTQTNAWKALEQHQKDLEQVTIQQLFEQEPTRFNDYSLKFAEQILVDYSKNNINQQTLSLLRQLAKECALNEATESMFNGEKINRTENRAVLHTALRNCANTPVYVDGKDVMPEVNAVLAKMKSFCQRVISGDWKGYTGKAITDVVNIGIGGSDLGPYMVTEALRPYKNHLTMHFVSNVDGTHIAETLKKVNPETTLFLVASKTFTTQETMTNAISARKWFLAAAQDESQIAKHFAALSTNVKEVEKFGIDTHNMFEFWDWVGGRYSLWSAIGLSIALSIGFDNFEQLLAGAHEMDKHFRTAPMEQNIPITLALIGIWNCNFLGAETEAMLPYDQYLHRFAAYFQQGNMESNGKYVDRSGQVINNYQTGPIIWGEPGTNGQHAFYQLIHQGTKIIPCDFIAPAQTHNVLSDHHNKLLSNFFAQTEALAFGKTQQEVEAEFIQAGKSLDEVKNIVPFKIFTGNKPTNSILVQKITPFTLGALIAMYEHKIFVQGVIFNIYSFDQWGVELGKQLANRILPELVGDEQINSHDSSTNGLINQFKSWR.

Glu-355 serves as the catalytic Proton donor. Residues His-387 and Lys-515 contribute to the active site.

It belongs to the GPI family.

The protein resides in the cytoplasm. It catalyses the reaction alpha-D-glucose 6-phosphate = beta-D-fructose 6-phosphate. It functions in the pathway carbohydrate biosynthesis; gluconeogenesis. The protein operates within carbohydrate degradation; glycolysis; D-glyceraldehyde 3-phosphate and glycerone phosphate from D-glucose: step 2/4. Functionally, catalyzes the reversible isomerization of glucose-6-phosphate to fructose-6-phosphate. The polypeptide is Glucose-6-phosphate isomerase (Histophilus somni (strain 2336) (Haemophilus somnus)).